The following is a 201-amino-acid chain: ADP-ribosylation factor-related protein 1 (201 aa).

Met-1 is subject to N-acetylmethionine. Residues 24 to 31, 75 to 79, and 134 to 137 each bind GTP; these read GLDNAGKT, DLGGQ, and NKQD.

This sequence belongs to the small GTPase superfamily. Arf family. Interacts with SYS1.

It localises to the golgi apparatus. Its subcellular location is the trans-Golgi network. Functionally, trans-Golgi-associated GTPase that regulates protein sorting. Controls the targeting of ARL1 and its effector to the trans-Golgi. Required for the lipidation of chylomicrons in the intestine and required for VLDL lipidation in the liver. This Pongo abelii (Sumatran orangutan) protein is ADP-ribosylation factor-related protein 1 (ARFRP1).